The chain runs to 631 residues: Probable potassium transport system protein Kup (631 aa).

The next 12 membrane-spanning stretches (helical) occupy residues 17-37, 56-76, 109-129, 147-167, 174-194, 215-235, 256-276, 288-308, 346-366, 378-398, 403-423, and 428-448; these read IGLLIAAVGVVYGDIGTSPLY, ILGVLSLIFWSLIWVVSFKYM, MMMVVFGLFGAALFYGDSMIT, GLDHWIVPMALVVLVGLFLIQ, IGVLFGPVMVVWFLVLGALGV, FFIIHPGIGVAILGAVVLALT, WFILVLPALLLNYFGQGALVL, LLAPSWALLPLIGLSTMATII, IYIGAVNWALMVGVIMLVIGF, VAVTGTMLCTTILVSTVMLML, PLLAVPLLICLLLVDGLFFAA, and IFQGGAFPVLAGAVLFILMTT.

It belongs to the HAK/KUP transporter (TC 2.A.72) family.

The protein resides in the cell inner membrane. The catalysed reaction is K(+)(in) + H(+)(in) = K(+)(out) + H(+)(out). Its function is as follows. Transport of potassium into the cell. Likely operates as a K(+):H(+) symporter. The polypeptide is Probable potassium transport system protein Kup (Pseudomonas syringae pv. tomato (strain ATCC BAA-871 / DC3000)).